A 342-amino-acid polypeptide reads, in one-letter code: Anthranilate phosphoribosyltransferase (342 aa).

5-phospho-alpha-D-ribose 1-diphosphate-binding positions include Gly83, 86–87, Thr91, 93–96, 111–119, and Ser123; these read GD, NIST, and KHGGRSVSS. Gly83 contributes to the anthranilate binding site. Position 95 (Ser95) interacts with Mg(2+). Arg169 provides a ligand contact to anthranilate. Asp228 and Glu229 together coordinate Mg(2+).

It belongs to the anthranilate phosphoribosyltransferase family. In terms of assembly, homodimer. Mg(2+) is required as a cofactor.

It catalyses the reaction N-(5-phospho-beta-D-ribosyl)anthranilate + diphosphate = 5-phospho-alpha-D-ribose 1-diphosphate + anthranilate. Its pathway is amino-acid biosynthesis; L-tryptophan biosynthesis; L-tryptophan from chorismate: step 2/5. Functionally, catalyzes the transfer of the phosphoribosyl group of 5-phosphorylribose-1-pyrophosphate (PRPP) to anthranilate to yield N-(5'-phosphoribosyl)-anthranilate (PRA). In Laribacter hongkongensis (strain HLHK9), this protein is Anthranilate phosphoribosyltransferase.